A 307-amino-acid chain; its full sequence is Aspartate carbamoyltransferase catalytic subunit (307 aa).

2 residues coordinate carbamoyl phosphate: Arg59 and Thr60. Residue Lys87 coordinates L-aspartate. The carbamoyl phosphate site is built by Arg109, His139, and Gln142. The L-aspartate site is built by Arg172 and Arg224. Carbamoyl phosphate is bound by residues Ala265 and Pro266.

It belongs to the aspartate/ornithine carbamoyltransferase superfamily. ATCase family. As to quaternary structure, heterododecamer (2C3:3R2) of six catalytic PyrB chains organized as two trimers (C3), and six regulatory PyrI chains organized as three dimers (R2).

It carries out the reaction carbamoyl phosphate + L-aspartate = N-carbamoyl-L-aspartate + phosphate + H(+). Its pathway is pyrimidine metabolism; UMP biosynthesis via de novo pathway; (S)-dihydroorotate from bicarbonate: step 2/3. In terms of biological role, catalyzes the condensation of carbamoyl phosphate and aspartate to form carbamoyl aspartate and inorganic phosphate, the committed step in the de novo pyrimidine nucleotide biosynthesis pathway. This is Aspartate carbamoyltransferase catalytic subunit from Streptococcus agalactiae serotype Ia (strain ATCC 27591 / A909 / CDC SS700).